We begin with the raw amino-acid sequence, 180 residues long: Crossover junction endodeoxyribonuclease RuvC (180 aa).

Active-site residues include aspartate 7, glutamate 66, and aspartate 138. 3 residues coordinate Mg(2+): aspartate 7, glutamate 66, and aspartate 138.

This sequence belongs to the RuvC family. In terms of assembly, homodimer which binds Holliday junction (HJ) DNA. The HJ becomes 2-fold symmetrical on binding to RuvC with unstacked arms; it has a different conformation from HJ DNA in complex with RuvA. In the full resolvosome a probable DNA-RuvA(4)-RuvB(12)-RuvC(2) complex forms which resolves the HJ. The cofactor is Mg(2+).

The protein localises to the cytoplasm. It catalyses the reaction Endonucleolytic cleavage at a junction such as a reciprocal single-stranded crossover between two homologous DNA duplexes (Holliday junction).. The RuvA-RuvB-RuvC complex processes Holliday junction (HJ) DNA during genetic recombination and DNA repair. Endonuclease that resolves HJ intermediates. Cleaves cruciform DNA by making single-stranded nicks across the HJ at symmetrical positions within the homologous arms, yielding a 5'-phosphate and a 3'-hydroxyl group; requires a central core of homology in the junction. The consensus cleavage sequence is 5'-(A/T)TT(C/G)-3'. Cleavage occurs on the 3'-side of the TT dinucleotide at the point of strand exchange. HJ branch migration catalyzed by RuvA-RuvB allows RuvC to scan DNA until it finds its consensus sequence, where it cleaves and resolves the cruciform DNA. The protein is Crossover junction endodeoxyribonuclease RuvC of Burkholderia pseudomallei (strain 1710b).